The following is a 591-amino-acid chain: Inactive metallocarboxypeptidase ECM14 (591 aa).

Residues 1–21 (MRLFARLEVLAILACAVPIAA) form the signal peptide. Residues 22–175 (IPSFLSNSYP…QTIYESYPSS (154 aa)) constitute a propeptide that is removed on maturation. In terms of domain architecture, Peptidase M14 spans 203 to 523 (DYQPFSVIVT…NAVMVLGRFL (321 aa)). 2 residues coordinate Zn(2+): histidine 265 and glutamate 268. Substrate-binding positions include 265 to 268 (HARE), arginine 323, and 340 to 341 (DR). Cysteine 334 and cysteine 357 are oxidised to a cystine. N-linked (GlcNAc...) asparagine glycans are attached at residues asparagine 350 and asparagine 381. Zn(2+) is bound at residue histidine 397. 398–399 (SY) is a binding site for substrate. The span at 533–543 (DWEDESQRPKA) shows a compositional bias: basic and acidic residues. A disordered region spans residues 533 to 591 (DWEDESQRPKADEDDIPSENELGENDDSWIPFDYRNHDDQNEGEGYDNDEWGFRRRRKG). 2 stretches are compositionally biased toward acidic residues: residues 544-559 (DEDD…ENDD) and 573-582 (NEGEGYDNDE).

Belongs to the peptidase M14 family. The cofactor is Zn(2+).

Its subcellular location is the vacuole. The protein localises to the secreted. Inactive carboxypeptidase that may play a role in cell wall organization and biogenesis. The polypeptide is Inactive metallocarboxypeptidase ECM14 (ECM14) (Paracoccidioides lutzii (strain ATCC MYA-826 / Pb01) (Paracoccidioides brasiliensis)).